A 388-amino-acid chain; its full sequence is 5-hydroxytryptamine receptor 1B (388 aa).

The segment at 1-29 (MEQPSRLCSPPASGSLTSSQTNHSTFPNP) is disordered. Topologically, residues 1 to 45 (MEQPSRLCSPPASGSLTSSQTNHSTFPNPNCSAPDLEPYQDSIAL) are extracellular. Residues 12–29 (ASGSLTSSQTNHSTFPNP) are compositionally biased toward polar residues. N-linked (GlcNAc...) asparagine glycosylation is found at Asn-22 and Asn-30. The helical transmembrane segment at 46-71 (PWKVLLATFLGLITLGTTLSNAFVIA) threads the bilayer. At 72–85 (TVSRTRKLHTPANY) the chain is on the cytoplasmic side. A helical transmembrane segment spans residues 86 to 110 (LIASLAVTDLLVSILVMPISTMYTV). Topologically, residues 111–118 (TGRWTLGQ) are extracellular. The chain crosses the membrane as a helical span at residues 119–144 (VVCDFWLSSDITCCTASILHLCVIAL). An intrachain disulfide couples Cys-121 to Cys-197. Residues Asp-128 and Thr-133 each coordinate ergotamine. The DRY motif; important for ligand-induced conformation changes and signaling motif lies at 145–147 (DRY). Residues 145–164 (DRYWAITDAVEYSAKRTPKR) are Cytoplasmic-facing. A helical membrane pass occupies residues 165–183 (AAGMIIMVWVFSVSISMPP). Over 184–203 (LFWRQAKAEEVADCSVNTDH) the chain is Extracellular. Val-199 serves as a coordination point for ergotamine. The chain crosses the membrane as a helical span at residues 204 to 227 (ILYTVYSTVGAFYFPTLLLIALYG). The Cytoplasmic portion of the chain corresponds to 228-313 (RIYVEARSRI…AARERKATRT (86 aa)). The segment at 249-282 (LTRAQLITDSPGSSSSGTSINSRAPEGPSESGSP) is disordered. A compositionally biased stretch (low complexity) spans 255-270 (ITDSPGSSSSGTSINS). A helical membrane pass occupies residues 314–335 (LGIILGAFIVCWLPFFIISLAL). The Extracellular segment spans residues 336-345 (PICDDACWFH). Residues 346 to 368 (LAIFDFFNWLGYLNSLINPIIYT) form a helical membrane-spanning segment. The short motif at 363-367 (NPIIY) is the NPxxY motif; important for ligand-induced conformation changes and signaling element. Residues 369–388 (KSNDDFKQAFQKLMRFRRTS) lie on the Cytoplasmic side of the membrane.

It belongs to the G-protein coupled receptor 1 family. As to quaternary structure, homodimer. Heterodimer with HTR1D. Phosphorylated. Desensitization of the receptor may be mediated by its phosphorylation. Post-translationally, palmitoylated.

The protein localises to the cell membrane. Its function is as follows. G-protein coupled receptor for 5-hydroxytryptamine (serotonin). Also functions as a receptor for ergot alkaloid derivatives, various anxiolytic and antidepressant drugs and other psychoactive substances, such as lysergic acid diethylamide (LSD). Ligand binding causes a conformation change that triggers signaling via guanine nucleotide-binding proteins (G proteins) and modulates the activity of downstream effectors, such as adenylate cyclase. HTR1B is coupled to G(i)/G(o) G alpha proteins and mediates inhibitory neurotransmission by inhibiting adenylate cyclase activity. Arrestin family members inhibit signaling via G proteins and mediate activation of alternative signaling pathways. Regulates the release of 5-hydroxytryptamine, dopamine and acetylcholine in the brain, and thereby affects neural activity, nociceptive processing, pain perception, mood and behavior. Besides, plays a role in vasoconstriction of cerebral arteries. The polypeptide is 5-hydroxytryptamine receptor 1B (HTR1B) (Didelphis virginiana (North American opossum)).